A 195-amino-acid polypeptide reads, in one-letter code: Thymidine kinase (195 aa).

ATP contacts are provided by residues glycine 15 to threonine 22 and aspartate 91 to asparagine 94. The active-site Proton acceptor is the glutamate 92. Zn(2+) contacts are provided by cysteine 148, cysteine 151, cysteine 186, and cysteine 189.

This sequence belongs to the thymidine kinase family. Homotetramer.

Its subcellular location is the cytoplasm. The enzyme catalyses thymidine + ATP = dTMP + ADP + H(+). The polypeptide is Thymidine kinase (Halobacterium salinarum (strain ATCC 29341 / DSM 671 / R1)).